We begin with the raw amino-acid sequence, 509 residues long: Aldehyde dehydrogenase 1A1 (509 aa).

Residues 175 to 178 (IPWN), 201 to 204 (KPAE), 234 to 235 (GP), 254 to 255 (GS), and 277 to 279 (ELG) contribute to the NAD(+) site. Catalysis depends on glutamate 277, which acts as the Proton acceptor. The Nucleophile role is filled by cysteine 311. Residues 357-361 (EQFQK) and 408-410 (EIF) contribute to the NAD(+) site.

The protein belongs to the aldehyde dehydrogenase family. Homotetramer.

It localises to the cytoplasm. It is found in the cytosol. The protein resides in the cell projection. Its subcellular location is the axon. It carries out the reaction an aldehyde + NAD(+) + H2O = a carboxylate + NADH + 2 H(+). It catalyses the reaction all-trans-retinal + NAD(+) + H2O = all-trans-retinoate + NADH + 2 H(+). The catalysed reaction is 9-cis-retinal + NAD(+) + H2O = 9-cis-retinoate + NADH + 2 H(+). The enzyme catalyses 11-cis-retinal + NAD(+) + H2O = 11-cis-retinoate + NADH + 2 H(+). It carries out the reaction 13-cis-retinal + NAD(+) + H2O = 13-cis-retinoate + NADH + 2 H(+). It catalyses the reaction 3-deoxyglucosone + NAD(+) + H2O = 2-dehydro-3-deoxy-D-gluconate + NADH + 2 H(+). The catalysed reaction is (E)-4-hydroxynon-2-enal + NAD(+) + H2O = (E)-4-hydroxynon-2-enoate + NADH + 2 H(+). The enzyme catalyses malonaldehyde + NAD(+) + H2O = 3-oxopropanoate + NADH + 2 H(+). It carries out the reaction hexanal + NAD(+) + H2O = hexanoate + NADH + 2 H(+). It catalyses the reaction propanal + NAD(+) + H2O = propanoate + NADH + 2 H(+). The catalysed reaction is acetaldehyde + NAD(+) + H2O = acetate + NADH + 2 H(+). The enzyme catalyses benzaldehyde + NAD(+) + H2O = benzoate + NADH + 2 H(+). It carries out the reaction 4-aminobutanal + NAD(+) + H2O = 4-aminobutanoate + NADH + 2 H(+). The protein operates within cofactor metabolism; retinol metabolism. Its function is as follows. Cytosolic dehydrogenase that catalyzes the irreversible oxidation of a wide range of aldehydes to their corresponding carboxylic acid. Functions downstream of retinol dehydrogenases and catalyzes the oxidation of retinaldehyde into retinoic acid, the second step in the oxidation of retinol/vitamin A into retinoic acid. This pathway is crucial to control the levels of retinol and retinoic acid, two important molecules which excess can be teratogenic and cytotoxic. Also oxidizes aldehydes resulting from lipid peroxidation like (E)-4-hydroxynon-2-enal/HNE, malonaldehyde and hexanal that form protein adducts and are highly cytotoxic. By participating for instance to the clearance of (E)-4-hydroxynon-2-enal/HNE in the lens epithelium prevents the formation of HNE-protein adducts and lens opacification. Also functions downstream of fructosamine-3-kinase in the fructosamine degradation pathway by catalyzing the oxidation of 3-deoxyglucosone, the carbohydrate product of fructosamine 3-phosphate decomposition, which is itself a potent glycating agent that may react with lysine and arginine side-chains of proteins. Also has an aminobutyraldehyde dehydrogenase activity and is probably part of an alternative pathway for the biosynthesis of GABA/4-aminobutanoate in midbrain, thereby playing a role in GABAergic synaptic transmission. This is Aldehyde dehydrogenase 1A1 from Gallus gallus (Chicken).